Consider the following 445-residue polypeptide: Tubulin beta-7 chain (445 aa).

Positions 11, 69, 138, 142, 143, 144, 204, and 226 each coordinate GTP. Position 69 (E69) interacts with Mg(2+). The interval 421 to 445 (EYQQYQDATAEDEEYEEEEEEEEET) is disordered. The span at 429–445 (TAEDEEYEEEEEEEEET) shows a compositional bias: acidic residues.

Belongs to the tubulin family. In terms of assembly, dimer of alpha and beta chains. A typical microtubule is a hollow water-filled tube with an outer diameter of 25 nm and an inner diameter of 15 nM. Alpha-beta heterodimers associate head-to-tail to form protofilaments running lengthwise along the microtubule wall with the beta-tubulin subunit facing the microtubule plus end conferring a structural polarity. Microtubules usually have 13 protofilaments but different protofilament numbers can be found in some organisms and specialized cells. Requires Mg(2+) as cofactor.

The protein localises to the cytoplasm. Its subcellular location is the cytoskeleton. In terms of biological role, tubulin is the major constituent of microtubules, a cylinder consisting of laterally associated linear protofilaments composed of alpha- and beta-tubulin heterodimers. Microtubules grow by the addition of GTP-tubulin dimers to the microtubule end, where a stabilizing cap forms. Below the cap, tubulin dimers are in GDP-bound state, owing to GTPase activity of alpha-tubulin. This chain is Tubulin beta-7 chain (TUBB7), found in Zea mays (Maize).